A 654-amino-acid chain; its full sequence is Hepatocyte growth factor activator serine proteases (654 aa).

Positions 1 to 33 (MGRWAWGPSLCPLPGMALLLLLLLLLVPHGAQP) are cleaved as a signal peptide. Residues 34-100 (QAGGNLTEPP…SSSPGDPVLT (67 aa)) form a disordered region. Residues 34–370 (QAGGNLTEPP…RLAACESLAR (337 aa)) constitute a propeptide, removed in mature form. N-linked (GlcNAc...) asparagine glycosylation is found at asparagine 38 and asparagine 46. Residues 57 to 81 (PVTSVTPVTPATSAPEAQGPRGRGL) are compositionally biased toward low complexity. Positions 101-148 (VDGQPCRFPFRYGGRMLHACTSEGSAHRKWCATTHNYDRDRAWGYCVQ) constitute a Fibronectin type-II domain. Disulfide bonds link cysteine 106-cysteine 131, cysteine 120-cysteine 146, cysteine 162-cysteine 173, cysteine 167-cysteine 184, cysteine 186-cysteine 195, cysteine 200-cysteine 228, cysteine 226-cysteine 235, cysteine 243-cysteine 254, cysteine 248-cysteine 265, cysteine 267-cysteine 276, cysteine 284-cysteine 365, cysteine 305-cysteine 347, cysteine 336-cysteine 360, cysteine 393-cysteine 520, cysteine 431-cysteine 447, cysteine 439-cysteine 509, cysteine 534-cysteine 603, cysteine 566-cysteine 582, and cysteine 593-cysteine 621. In terms of domain architecture, EGF-like 1 spans 158-196 (ALDSCASSPCLNGGSCSHTQDPGSYHCTCPMAFTGRNCD). The Fibronectin type-I domain maps to 198 to 238 (EKCFDETRYEHLEAGDRWARVSQGQVEQCECAGGQIRCEGT). In terms of domain architecture, EGF-like 2 spans 239 to 277 (RHTACLSSPCLNGGTCHLIVATGTTVCSCPPGHAGRLCN). A Kringle domain is found at 283-365 (RCFVGNGTEY…SWEYCRLAAC (83 aa)). A glycan (N-linked (GlcNAc...) asparagine) is linked at asparagine 288. The 239-residue stretch at 407 to 645 (IIGGSSSLPG…YVDWIKDRIW (239 aa)) folds into the Peptidase S1 domain. The active-site Charge relay system is the histidine 446. N-linked (GlcNAc...) asparagine glycosylation is found at asparagine 467 and asparagine 491. Catalysis depends on aspartate 496, which acts as the Charge relay system. A glycan (N-linked (GlcNAc...) asparagine) is linked at asparagine 545. The Charge relay system role is filled by serine 597.

This sequence belongs to the peptidase S1 family. As to quaternary structure, heterodimer of a short chain and a long chain linked by a disulfide bond. Post-translationally, the active form of HGFAC presents in the serum is derived from the COOH-terminal region of the precursor by the cleavage of bonds between Arg-370 and Ile-371 and Arg-406 and Ile-407. In terms of tissue distribution, liver.

It is found in the secreted. Serine protease that hydrolyzes the inactive zymogen hepatocyte growth factor (HGFsc) to an activated disulfide-linked heterodimer, then initiating hepatocyte growth factor receptor signaling pathway. This Canis lupus familiaris (Dog) protein is Hepatocyte growth factor activator serine proteases (HGFAC).